The sequence spans 365 residues: Solute carrier family 35 member G1 (365 aa).

Residues 1 to 33 (MRPQDSTGVAELQEPGLPLTDDAPPGATEEPAA) form a disordered region. The span at 23-33 (APPGATEEPAA) shows a compositional bias: low complexity. 10 helical membrane-spanning segments follow: residues 69 to 89 (GLGLFYTLLSAFLFSVGSLFV), 97 to 117 (AVEISAFRCVFQMLVVIPCLI), 131 to 151 (IFLILRGVLGSTAMMLIYYAY), 156 to 176 (LADATVITFSSPVFTSIFAWI), 187 to 207 (ALFTVFTITGVILIVRPPFLF), 222 to 242 (LKGTFAAIGSAVFAASTLVIL), 252 to 272 (FLSIWYYVVLGLVESVIILSV), 286 to 306 (LFLIFIGLFGLGGQIFITKAL), 311 to 333 (AGPVAIMKTMDVVFAFIFQIIFF), and 338 to 357 (TWWTVGGALCVVASNVGAAI). 2 EamA domains span residues 80 to 202 (FLFS…LIVR) and 233 to 357 (VFAA…GAAI).

This sequence belongs to the TMEM20 family. In terms of assembly, interacts with STIM1; stimulated by depletion of intracellular calcium. Interacts with ORAI1. Interacts with the plasma membrane calcium-transporting ATPases ATP2B1 and ATP2B4. Interacts with ATP1A1, ATP2A2, KPNB1 and XPO1. Ubiquitously expressed.

The protein resides in the cell membrane. Its subcellular location is the endoplasmic reticulum membrane. Its function is as follows. May play a role in intracellular calcium sensing and homeostasis. May act as a negative regulator of plasma membrane calcium-transporting ATPases preventing calcium efflux from the cell. This is Solute carrier family 35 member G1 (SLC35G1) from Homo sapiens (Human).